We begin with the raw amino-acid sequence, 304 residues long: Protoheme IX farnesyltransferase (304 aa).

A run of 9 helical transmembrane segments spans residues 32 to 52 (VVALMLLTVLVGMCLAVPGSV), 54 to 74 (LQPLVIGMIGIGMMAGAAAAF), 104 to 124 (ALTFAISLAALGFVLLYTLVN), 126 to 146 (LTAWLTFASLIGYALVYTAYL), 154 to 174 (IVVGGLAGAMPPLLGWTSVTG), 180 to 200 (ALLLVIIIFAWTPPHFWALAI), 226 to 246 (CILLYTVLLAIACLLPVLVGM), 247 to 267 (CGPVYLVGSTLLSCGFIYKAW), and 284 to 304 (FSIYHLMLLFLVLLVDHYLWV).

Belongs to the UbiA prenyltransferase family. Protoheme IX farnesyltransferase subfamily.

It is found in the cell inner membrane. It catalyses the reaction heme b + (2E,6E)-farnesyl diphosphate + H2O = Fe(II)-heme o + diphosphate. Its pathway is porphyrin-containing compound metabolism; heme O biosynthesis; heme O from protoheme: step 1/1. Its function is as follows. Converts heme B (protoheme IX) to heme O by substitution of the vinyl group on carbon 2 of heme B porphyrin ring with a hydroxyethyl farnesyl side group. This chain is Protoheme IX farnesyltransferase, found in Shewanella sediminis (strain HAW-EB3).